The chain runs to 932 residues: von Willebrand factor A domain-containing protein DDB_G0292028 (932 aa).

Positions 1–49 (MNFIKKVIGGGSSKSKTDIKIEDEQHEQQHEQQHEKQQIPDKISTSKVN) are disordered. Over residues 15 to 39 (SKTDIKIEDEQHEQQHEQQHEKQQI) the composition is skewed to basic and acidic residues. Residues 95–222 (LTSPGLNTKV…DVTVNITITS (128 aa)) enclose the VIT domain. In terms of domain architecture, VWFA spans 342 to 521 (EFIFVLDCSG…IAMQPTLSNI (180 aa)). 2 disordered regions span residues 661 to 752 (QQIN…SQAQ) and 800 to 834 (TSQI…STSS). The span at 677–686 (TRVQGSSSVF) shows a compositional bias: polar residues. Low complexity predominate over residues 815–834 (SSSPTIQKSSSLPSRPSTSS).

The sequence is that of von Willebrand factor A domain-containing protein DDB_G0292028 from Dictyostelium discoideum (Social amoeba).